Reading from the N-terminus, the 284-residue chain is Acetylglutamate kinase (284 aa).

Substrate is bound by residues G66–G67, R88, and N179.

The protein belongs to the acetylglutamate kinase family. ArgB subfamily.

It is found in the cytoplasm. It catalyses the reaction N-acetyl-L-glutamate + ATP = N-acetyl-L-glutamyl 5-phosphate + ADP. It functions in the pathway amino-acid biosynthesis; L-arginine biosynthesis; N(2)-acetyl-L-ornithine from L-glutamate: step 2/4. Catalyzes the ATP-dependent phosphorylation of N-acetyl-L-glutamate. The sequence is that of Acetylglutamate kinase from Actinobacillus pleuropneumoniae serotype 3 (strain JL03).